We begin with the raw amino-acid sequence, 177 residues long: Protein TERMINAL FLOWER 1 (177 aa).

Belongs to the phosphatidylethanolamine-binding protein family. As to expression, expressed below the apical dome of inflorescence and coflorescence meristems, and in inflorescence stem.

It is found in the cytoplasm. In terms of biological role, controls inflorescence meristem identity and is required for maintenance of an indeterminate inflorescence. Prevents the expression of 'APETALA1' and 'LEAFY'. Also plays a role in the regulation of the time of flowering in the long-day flowering pathway. May form complexes with phosphorylated ligands by interfering with kinases and their effectors. This Arabidopsis thaliana (Mouse-ear cress) protein is Protein TERMINAL FLOWER 1 (TFL1).